The chain runs to 204 residues: Large ribosomal subunit protein eL15 (204 aa).

It belongs to the eukaryotic ribosomal protein eL15 family.

The protein is Large ribosomal subunit protein eL15 (RpL15) of Anopheles gambiae (African malaria mosquito).